Reading from the N-terminus, the 1287-residue chain is Vacuolating cytotoxin autotransporter (1287 aa).

The N-terminal stretch at 1-33 (MEIQQTHRKINRPLVSLALVGALVSITPQQSHA) is a signal peptide. A disordered region spans residues 326-381 (PPEGGYKDKPNNTPSQSGAKNDKQESSQNNSNTQVINPPNSTQKTEVQPTQVIDGP). The segment covering 351–376 (SSQNNSNTQVINPPNSTQKTEVQPTQ) has biased composition (polar residues). Residues 1014–1287 (KYEKPTNVWA…ASNLGMRYSF (274 aa)) form the Autotransporter domain.

The protein resides in the periplasm. It is found in the secreted. Its subcellular location is the cell surface. The protein localises to the cell outer membrane. Functionally, induces vacuolation of eukaryotic cells. Causes ulceration and gastric lesions. The protein is Vacuolating cytotoxin autotransporter (vacA) of Helicobacter pylori (Campylobacter pylori).